The following is a 347-amino-acid chain: N-acetyl-gamma-glutamyl-phosphate reductase (347 aa).

Residue cysteine 153 is part of the active site.

It belongs to the NAGSA dehydrogenase family. Type 1 subfamily.

The protein localises to the cytoplasm. It catalyses the reaction N-acetyl-L-glutamate 5-semialdehyde + phosphate + NADP(+) = N-acetyl-L-glutamyl 5-phosphate + NADPH + H(+). The protein operates within amino-acid biosynthesis; L-arginine biosynthesis; N(2)-acetyl-L-ornithine from L-glutamate: step 3/4. Catalyzes the NADPH-dependent reduction of N-acetyl-5-glutamyl phosphate to yield N-acetyl-L-glutamate 5-semialdehyde. This Mycobacterium leprae (strain Br4923) protein is N-acetyl-gamma-glutamyl-phosphate reductase.